The sequence spans 883 residues: Phosphoenolpyruvate carboxylase (883 aa).

Catalysis depends on residues histidine 138 and lysine 546.

Belongs to the PEPCase type 1 family. It depends on Mg(2+) as a cofactor.

The catalysed reaction is oxaloacetate + phosphate = phosphoenolpyruvate + hydrogencarbonate. Functionally, forms oxaloacetate, a four-carbon dicarboxylic acid source for the tricarboxylic acid cycle. This chain is Phosphoenolpyruvate carboxylase, found in Salmonella schwarzengrund (strain CVM19633).